Reading from the N-terminus, the 447-residue chain is Probable glycine dehydrogenase (decarboxylating) subunit 1 (447 aa).

Belongs to the GcvP family. N-terminal subunit subfamily. As to quaternary structure, the glycine cleavage system is composed of four proteins: P, T, L and H. In this organism, the P 'protein' is a heterodimer of two subunits.

It catalyses the reaction N(6)-[(R)-lipoyl]-L-lysyl-[glycine-cleavage complex H protein] + glycine + H(+) = N(6)-[(R)-S(8)-aminomethyldihydrolipoyl]-L-lysyl-[glycine-cleavage complex H protein] + CO2. In terms of biological role, the glycine cleavage system catalyzes the degradation of glycine. The P protein binds the alpha-amino group of glycine through its pyridoxal phosphate cofactor; CO(2) is released and the remaining methylamine moiety is then transferred to the lipoamide cofactor of the H protein. The chain is Probable glycine dehydrogenase (decarboxylating) subunit 1 from Halalkalibacterium halodurans (strain ATCC BAA-125 / DSM 18197 / FERM 7344 / JCM 9153 / C-125) (Bacillus halodurans).